The following is a 559-amino-acid chain: Aminopeptidase Q (559 aa).

Residues 1–13 (MSRPFSSGVYVSR) are Cytoplasmic-facing. The helical; Signal-anchor for type II membrane protein transmembrane segment at 14–34 (GVALLLAALTAVLLLVLVALA) threads the bilayer. Residues 35 to 559 (SLYGSCAHVQ…VPFRHFLAEH (525 aa)) are Lumenal-facing. N-linked (GlcNAc...) asparagine glycosylation is found at asparagine 121 and asparagine 129. Residue glutamate 237 coordinates substrate. Residues asparagine 258, asparagine 285, and asparagine 343 are each glycosylated (N-linked (GlcNAc...) asparagine). Position 376-380 (376-380 (GAMEN)) interacts with substrate. Histidine 412 is a Zn(2+) binding site. The active-site Proton acceptor is glutamate 413. Residues histidine 416 and glutamate 435 each coordinate Zn(2+).

The protein belongs to the peptidase M1 family. In terms of assembly, homodimer. It depends on Zn(2+) as a cofactor. In terms of processing, N-glycosylated.

It is found in the membrane. Inhibited by bestatin. Its function is as follows. Metalloprotease which may be important for placentation by regulating biological activity of key peptides at the embryo-maternal interface. On synthetic substrates it shows a marked preference for Leu-4-methylcoumaryl-7-amide (Leu-MCA) over Met-MCA, Arg-LCA and Lys-LCA. Cleaves the N-terminal amino acid of several peptides such as angiotensin-3, kisspeptin-10 and endokinin C. In Mus musculus (Mouse), this protein is Aminopeptidase Q.